Consider the following 55-residue polypeptide: Large ribosomal subunit protein bL33 (55 aa).

This sequence belongs to the bacterial ribosomal protein bL33 family.

This chain is Large ribosomal subunit protein bL33, found in Burkholderia cenocepacia (strain ATCC BAA-245 / DSM 16553 / LMG 16656 / NCTC 13227 / J2315 / CF5610) (Burkholderia cepacia (strain J2315)).